The primary structure comprises 137 residues: 6,7-dimethyl-8-ribityllumazine synthase (137 aa).

5-amino-6-(D-ribitylamino)uracil contacts are provided by residues F11, 43-45 (SFD), and 67-69 (CVI). 72–73 (DT) is a (2S)-2-hydroxy-3-oxobutyl phosphate binding site. The active-site Proton donor is H75. L100 is a binding site for 5-amino-6-(D-ribitylamino)uracil. Position 115 (R115) interacts with (2S)-2-hydroxy-3-oxobutyl phosphate.

This sequence belongs to the DMRL synthase family. Forms an icosahedral capsid composed of 60 subunits, arranged as a dodecamer of pentamers.

It catalyses the reaction (2S)-2-hydroxy-3-oxobutyl phosphate + 5-amino-6-(D-ribitylamino)uracil = 6,7-dimethyl-8-(1-D-ribityl)lumazine + phosphate + 2 H2O + H(+). It functions in the pathway cofactor biosynthesis; riboflavin biosynthesis; riboflavin from 2-hydroxy-3-oxobutyl phosphate and 5-amino-6-(D-ribitylamino)uracil: step 1/2. Catalyzes the formation of 6,7-dimethyl-8-ribityllumazine by condensation of 5-amino-6-(D-ribitylamino)uracil with 3,4-dihydroxy-2-butanone 4-phosphate. This is the penultimate step in the biosynthesis of riboflavin. The polypeptide is 6,7-dimethyl-8-ribityllumazine synthase (Methanococcus maripaludis (strain DSM 14266 / JCM 13030 / NBRC 101832 / S2 / LL)).